Consider the following 635-residue polypeptide: Early transcription factor 70 kDa subunit (635 aa).

Residues 32–185 enclose the Helicase ATP-binding domain; the sequence is RSILDENNSV…SNIISIMSDE (154 aa). 45–52 is a binding site for ATP; that stretch reads HIMGSGKT. The DEXH box signature appears at 135 to 138; that stretch reads DEAH.

It belongs to the helicase family. VETF subfamily. In terms of assembly, heterodimer of a 70 kDa and a 82 kDa subunit. Part of the early transcription complex composed of ETF, RAP94, and the DNA-directed RNA polymerase.

Its subcellular location is the virion. Acts with RNA polymerase to initiate transcription from early gene promoters. Is recruited by the RPO-associated protein of 94 kDa (RAP94) to form the early transcription complex, which also contains the core RNA polymerase. ETF heterodimer binds to early gene promoters. This Homo sapiens (Human) protein is Early transcription factor 70 kDa subunit (VETFS).